The following is a 143-amino-acid chain: Large ribosomal subunit protein uL11 (143 aa).

The protein belongs to the universal ribosomal protein uL11 family. As to quaternary structure, part of the ribosomal stalk of the 50S ribosomal subunit. Interacts with L10 and the large rRNA to form the base of the stalk. L10 forms an elongated spine to which L12 dimers bind in a sequential fashion forming a multimeric L10(L12)X complex. In terms of processing, one or more lysine residues are methylated.

In terms of biological role, forms part of the ribosomal stalk which helps the ribosome interact with GTP-bound translation factors. The chain is Large ribosomal subunit protein uL11 from Pseudomonas putida (strain ATCC 700007 / DSM 6899 / JCM 31910 / BCRC 17059 / LMG 24140 / F1).